Reading from the N-terminus, the 412-residue chain is Mitochondrial distribution and morphology protein 12 (412 aa).

Residues Met-1 to Gly-410 enclose the SMP-LTD domain. 4 disordered regions span residues Glu-66–Glu-96, Tyr-108–Asp-136, Gln-166–Asn-238, and Pro-314–Pro-354. A compositionally biased stretch (low complexity) spans Asn-220–Asn-238.

It belongs to the MDM12 family. Component of the ER-mitochondria encounter structure (ERMES) or MDM complex, composed of MMM1, MDM10, MDM12 and MDM34. An MMM1 homodimer associates with one molecule of MDM12 on each side in a pairwise head-to-tail manner, and the SMP-LTD domains of MMM1 and MDM12 generate a continuous hydrophobic tunnel for phospholipid trafficking.

The protein resides in the mitochondrion outer membrane. It localises to the endoplasmic reticulum membrane. In terms of biological role, component of the ERMES/MDM complex, which serves as a molecular tether to connect the endoplasmic reticulum (ER) and mitochondria. Components of this complex are involved in the control of mitochondrial shape and protein biogenesis, and function in nonvesicular lipid trafficking between the ER and mitochondria. MDM12 is required for the interaction of the ER-resident membrane protein MMM1 and the outer mitochondrial membrane-resident beta-barrel protein MDM10. The MDM12-MMM1 subcomplex functions in the major beta-barrel assembly pathway that is responsible for biogenesis of all mitochondrial outer membrane beta-barrel proteins, and acts in a late step after the SAM complex. The MDM10-MDM12-MMM1 subcomplex further acts in the TOM40-specific pathway after the action of the MDM12-MMM1 complex. Essential for establishing and maintaining the structure of mitochondria and maintenance of mtDNA nucleoids. The sequence is that of Mitochondrial distribution and morphology protein 12 from Coprinopsis cinerea (strain Okayama-7 / 130 / ATCC MYA-4618 / FGSC 9003) (Inky cap fungus).